The following is a 260-amino-acid chain: NH(3)-dependent NAD(+) synthetase (260 aa).

31 to 38 (GLSGGLDS) contributes to the ATP binding site. Position 37 (Asp37) interacts with Mg(2+). Arg112 serves as a coordination point for deamido-NAD(+). ATP is bound at residue Thr132. Position 137 (Glu137) interacts with Mg(2+). ATP-binding residues include Lys161 and Ser183.

It belongs to the NAD synthetase family. In terms of assembly, homodimer.

The catalysed reaction is deamido-NAD(+) + NH4(+) + ATP = AMP + diphosphate + NAD(+) + H(+). The protein operates within cofactor biosynthesis; NAD(+) biosynthesis; NAD(+) from deamido-NAD(+) (ammonia route): step 1/1. Catalyzes the ATP-dependent amidation of deamido-NAD to form NAD. Uses ammonia as a nitrogen source. The polypeptide is NH(3)-dependent NAD(+) synthetase (Helicobacter pylori (strain J99 / ATCC 700824) (Campylobacter pylori J99)).